The chain runs to 294 residues: Foldase protein PrsA 1 (294 aa).

Residues 1-21 (MTKLKKVMISVIAATLLLLAG) form the signal peptide. C22 carries the N-palmitoyl cysteine lipid modification. Residue C22 is the site of S-diacylglycerol cysteine attachment. A PpiC domain is found at 135-226 (EPDITVRHIL…YGYHLIQLVK (92 aa)).

Belongs to the PrsA family.

Its subcellular location is the cell membrane. The enzyme catalyses [protein]-peptidylproline (omega=180) = [protein]-peptidylproline (omega=0). Plays a major role in protein secretion by helping the post-translocational extracellular folding of several secreted proteins. The protein is Foldase protein PrsA 1 (prsA1) of Listeria monocytogenes serovar 1/2a (strain ATCC BAA-679 / EGD-e).